Reading from the N-terminus, the 353-residue chain is Rhodopsin (353 aa).

At 1-36 (MNGTEGENFYIPFSNKTGLARSPFEYPQYYLAEPWK) the chain is on the extracellular side. N-linked (GlcNAc...) asparagine glycosylation is found at Asn-2 and Asn-15. Residues 37-61 (YSVLAAYMFFLILVGFPVNFLTLFV) traverse the membrane as a helical segment. Residues 62 to 73 (TVQHKKLRTPLN) lie on the Cytoplasmic side of the membrane. A helical membrane pass occupies residues 74–96 (YILLNLAVANLFMVLFGFTLTMY). Topologically, residues 97–110 (SSMNGYFVFGPTMC) are extracellular. An intrachain disulfide couples Cys-110 to Cys-187. The chain crosses the membrane as a helical span at residues 111–133 (NFEGFFATLGGEMSLWSLVVLAI). Positions 134 to 136 (ERY) match the 'Ionic lock' involved in activated form stabilization motif. Over 134-152 (ERYIVICKPMGNFRFGSTH) the chain is Cytoplasmic. Residues 153 to 173 (AYMGVAFTWFMALSCAAPPLV) traverse the membrane as a helical segment. The Extracellular segment spans residues 174–202 (GWSRYLPEGMQCSCGPDYYTLNPNFNNES). A helical transmembrane segment spans residues 203–224 (FVIYMFLVHFIIPFIVIFFCYG). Topologically, residues 225–252 (RLLCTVKEAAAAQQESASTQKAEKEVTR) are cytoplasmic. The helical transmembrane segment at 253 to 274 (MVVLMVIGFLVCWVPYASVAFY) threads the bilayer. Residues 275–286 (IFTHQGSDFGAT) lie on the Extracellular side of the membrane. The chain crosses the membrane as a helical span at residues 287-308 (FMTVPAFFAKTSALYNPIIYIL). Lys-296 is subject to N6-(retinylidene)lysine. Over 309–353 (MNKQFRNCMITTLCCGKNPLGDEDSGASTSKTEVSSVSTSQVSPA) the chain is Cytoplasmic. Positions 330–353 (DEDSGASTSKTEVSSVSTSQVSPA) are disordered. Over residues 336–353 (STSKTEVSSVSTSQVSPA) the composition is skewed to low complexity.

This sequence belongs to the G-protein coupled receptor 1 family. Opsin subfamily. Phosphorylated on some or all of the serine and threonine residues present in the C-terminal region. In terms of processing, contains one covalently linked retinal chromophore.

It is found in the membrane. Its subcellular location is the cell projection. The protein localises to the cilium. The protein resides in the photoreceptor outer segment. Photoreceptor required for image-forming vision at low light intensity. While most salt water fish species use retinal as chromophore, most freshwater fish use 3-dehydroretinal, or a mixture of retinal and 3-dehydroretinal. Light-induced isomerization of 11-cis to all-trans retinal triggers a conformational change that activates signaling via G-proteins. Subsequent receptor phosphorylation mediates displacement of the bound G-protein alpha subunit by arrestin and terminates signaling. The chain is Rhodopsin (RHO) from Petromyzon marinus (Sea lamprey).